Consider the following 222-residue polypeptide: MIF4G domain-containing protein B (222 aa).

The 203-residue stretch at 3–205 (NSSKEDYKIQ…LEILEFRAGG (203 aa)) folds into the MIF4G domain.

Belongs to the MIF4GD family. In terms of assembly, interacts with eif4g1, eif4g2 and slbp; probably tethered by SLBP to the 3'-end of mRNAs ending with the histone stem-loop, it also interacts with eif4g1 which is bound to their 5'-end.

It localises to the cytoplasm. The protein resides in the nucleus. In terms of biological role, functions in replication-dependent translation of histone mRNAs which differ from other eukaryotic mRNAs in that they do not end with a poly-A tail but a stem-loop. May participate in circularizing those mRNAs specifically enhancing their translation. The protein is MIF4G domain-containing protein B (mif4gdb) of Danio rerio (Zebrafish).